A 217-amino-acid chain; its full sequence is Uracil-DNA glycosylase (217 aa).

The active-site Proton acceptor is aspartate 62.

Belongs to the uracil-DNA glycosylase (UDG) superfamily. UNG family.

It is found in the cytoplasm. The catalysed reaction is Hydrolyzes single-stranded DNA or mismatched double-stranded DNA and polynucleotides, releasing free uracil.. Excises uracil residues from the DNA which can arise as a result of misincorporation of dUMP residues by DNA polymerase or due to deamination of cytosine. The chain is Uracil-DNA glycosylase from Streptococcus mutans serotype c (strain ATCC 700610 / UA159).